A 172-amino-acid chain; its full sequence is MRNLILVGPMGAGKSTIGRLLAKELRLLFKDSDKEIELRTGANIPWIFDKEGEPGFREREQAMIAELCALDGVVLATGGGAVMRDANRAALRAGGRVVYLHASVEQQVGRTSRDRNRPLLRTANPEATLRALFEARDPLYREIADLVVETDERPPRMVVLDILERLQQLPPR.

ATP is bound at residue 11-16; that stretch reads GAGKST. S15 contributes to the Mg(2+) binding site. Substrate contacts are provided by D33, R57, and G79. R117 provides a ligand contact to ATP. Substrate is bound at residue R136. R153 lines the ATP pocket.

It belongs to the shikimate kinase family. In terms of assembly, monomer. Requires Mg(2+) as cofactor.

It is found in the cytoplasm. The enzyme catalyses shikimate + ATP = 3-phosphoshikimate + ADP + H(+). It participates in metabolic intermediate biosynthesis; chorismate biosynthesis; chorismate from D-erythrose 4-phosphate and phosphoenolpyruvate: step 5/7. In terms of biological role, catalyzes the specific phosphorylation of the 3-hydroxyl group of shikimic acid using ATP as a cosubstrate. The chain is Shikimate kinase from Pseudomonas entomophila (strain L48).